The chain runs to 492 residues: Zn(2)-C6 fungal-type transcription factor (492 aa).

The segment at residues 14–41 (CRRCKNRKIKCDEVHPRCGNCAKHGVPC) is a DNA-binding region (zn(2)-C6 fungal-type). A disordered region spans residues 58-119 (TSTESVGAPT…QPSISSSTNT (62 aa)). A compositionally biased stretch (low complexity) spans 78–95 (SAPRTPLTRPRAPSSPAR). Position 82 is a phosphothreonine (threonine 82). 2 positions are modified to phosphoserine: serine 92 and serine 102. Positions 107–119 (VYSQPSISSSTNT) are enriched in polar residues. Residue threonine 217 is modified to Phosphothreonine. Serine 305 bears the Phosphoserine mark.

In terms of assembly, interacts with HOG1. Post-translationally, phosphorylation at Thr-82, Ser-92, Ser-102, thr-117 and ser-305 by HOG1 is required for regulating expression of ergosterol biosynthesis genes.

It localises to the nucleus. In terms of biological role, transcription factor that targets gene promoters containing 2 conserved CGAA repeat sequences. Positively regulates the expression of ergosterol biosynthesis genes including CYP51A and CYP51B encoding the sterol 14-alpha demethylase, and ERG6A and ERG6B encoding the sterol 24-C-methyltransferase. The sequence is that of Zn(2)-C6 fungal-type transcription factor from Gibberella zeae (strain ATCC MYA-4620 / CBS 123657 / FGSC 9075 / NRRL 31084 / PH-1) (Wheat head blight fungus).